Consider the following 228-residue polypeptide: uncharacterized protein (228 aa).

Belongs to the HAD-like hydrolase superfamily.

The protein localises to the cytoplasm. The protein resides in the nucleus. This is an uncharacterized protein from Schizosaccharomyces pombe (strain 972 / ATCC 24843) (Fission yeast).